Reading from the N-terminus, the 412-residue chain is Protein translocase subunit SecY (412 aa).

9 helical membrane passes run 17-37, 58-78, 117-137, 143-163, 170-190, 251-271, 293-313, 350-370, and 372-392; these read IFLT…PVPG, IFSG…VPYI, ALGW…PYVF, FVVQ…WFSE, IGNG…PKLI, VMPI…GQVI, YLIF…SLII, TFLG…IENI, and SIST…GVAI.

It belongs to the SecY/SEC61-alpha family. As to quaternary structure, component of the plastid Sec protein translocase complex, which is composed of at least SecY and SecE.

Its subcellular location is the plastid. The protein localises to the chloroplast thylakoid membrane. In terms of biological role, the central subunit of the protein translocation channel SecYE. Consists of two halves formed by TMs 1-5 and 6-10. These two domains form a lateral gate at the front which open onto the bilayer between TMs 2 and 7, and are clamped together by SecE at the back. The channel is closed by both a pore ring composed of hydrophobic SecY resides and a short helix (helix 2A) on the extracellular side of the membrane which forms a plug. The sequence is that of Protein translocase subunit SecY from Pyrenomonas salina.